We begin with the raw amino-acid sequence, 138 residues long: Gastrula zinc finger protein XlCGF44.2 (138 aa).

5 consecutive C2H2-type zinc fingers follow at residues 5–27 (FACT…KRIH), 32–54 (FVCA…QRLH), 60–82 (FTCT…QQIH), 88–110 (YVCS…MKTH), and 116–138 (FACS…QESH).

Belongs to the krueppel C2H2-type zinc-finger protein family.

The protein localises to the nucleus. In terms of biological role, may be involved in transcriptional regulation. The polypeptide is Gastrula zinc finger protein XlCGF44.2 (Xenopus laevis (African clawed frog)).